The primary structure comprises 378 residues: Ferredoxin--NADP reductase, embryo isozyme, chloroplastic (378 aa).

Residues 1–62 (MASALGAQAS…SRHMNKIFSM (62 aa)) constitute a chloroplast transit peptide. The region spanning 93 to 221 (KEPYTATIVS…TGPSGKIMLL (129 aa)) is the FAD-binding FR-type domain. Residues 153 to 156 (RLYS), 174 to 176 (CVR), Tyr180, 195 to 197 (ICS), and Thr237 each bind FAD. Residues Ser156 and Arg176 each coordinate NADP(+). Residues Thr237, 269–270 (VA), 299–300 (SR), Lys309, 337–338 (GL), and Glu376 each bind NADP(+).

Belongs to the ferredoxin--NADP reductase type 1 family. The cofactor is FAD.

It localises to the plastid. Its subcellular location is the chloroplast. The enzyme catalyses 2 reduced [2Fe-2S]-[ferredoxin] + NADP(+) + H(+) = 2 oxidized [2Fe-2S]-[ferredoxin] + NADPH. It participates in energy metabolism; photosynthesis. Its function is as follows. May play a key role in regulating the relative amounts of cyclic and non-cyclic electron flow to meet the demands of the plant for ATP and reducing power. Is involved in nitrate assimilation. The polypeptide is Ferredoxin--NADP reductase, embryo isozyme, chloroplastic (Oryza sativa subsp. japonica (Rice)).